Here is a 440-residue protein sequence, read N- to C-terminus: Streptokinase G (440 aa).

An N-terminal signal peptide occupies residues Met-1–Ala-26.

Its function is as follows. This protein is not a protease, but it activates plasminogen by complexing with it. As a potential virulence factor, it is thought to prevent the formation of effective fibrin barriers around the site of infection, thereby contributing to the invasiveness of the cells. The chain is Streptokinase G (skg) from Streptococcus sp. (strain 19909).